Here is an 88-residue protein sequence, read N- to C-terminus: Sec-independent protein translocase protein TatA (88 aa).

The chain crosses the membrane as a helical span at residues 1–21 (MGGISIWQLLIIALIVVLLFG). A disordered region spans residues 43-88 (MSSEEDKKALEDAEAAKPVQTAQTVQSAQPTQQATEKKPESNKEQA). Basic and acidic residues predominate over residues 46 to 57 (EEDKKALEDAEA). The segment covering 62-76 (QTAQTVQSAQPTQQA) has biased composition (polar residues). The segment covering 77–88 (TEKKPESNKEQA) has biased composition (basic and acidic residues).

The protein belongs to the TatA/E family. In terms of assembly, the Tat system comprises two distinct complexes: a TatABC complex, containing multiple copies of TatA, TatB and TatC subunits, and a separate TatA complex, containing only TatA subunits. Substrates initially bind to the TatABC complex, which probably triggers association of the separate TatA complex to form the active translocon.

Its subcellular location is the cell inner membrane. Part of the twin-arginine translocation (Tat) system that transports large folded proteins containing a characteristic twin-arginine motif in their signal peptide across membranes. TatA could form the protein-conducting channel of the Tat system. This chain is Sec-independent protein translocase protein TatA, found in Shewanella oneidensis (strain ATCC 700550 / JCM 31522 / CIP 106686 / LMG 19005 / NCIMB 14063 / MR-1).